Here is a 110-residue protein sequence, read N- to C-terminus: MESNRGQGSIQQLLAAEVEAQHIVNAARTAKMARLKQAKEEAEKEIAEYKAQTEQDFQRKLEETSGDSGANVKRLEQETDTKIEQLKNEASRISKDVVEMLLKHVTTVKN.

The residue at position 1 (M1) is an N-acetylmethionine. Residues 60–80 (KLEETSGDSGANVKRLEQETD) are disordered.

It belongs to the V-ATPase G subunit family. V-ATPase is a heteromultimeric enzyme composed of a peripheral catalytic V1 complex (components A to H) attached to an integral membrane V0 proton pore complex (components: a, c, c'', d and e).

The protein localises to the cell membrane. It localises to the vacuole membrane. Catalytic subunit of the peripheral V1 complex of vacuolar ATPase (V-ATPase). V-ATPase is responsible for acidifying a variety of intracellular compartments in eukaryotic cells. In Arabidopsis thaliana (Mouse-ear cress), this protein is V-type proton ATPase subunit G1 (VHA-G1).